Here is a 28-residue protein sequence, read N- to C-terminus: Dermaseptin-2.2TR (28 aa).

As to expression, expressed by the skin glands.

The protein localises to the secreted. Has antimicrobial activity. This is Dermaseptin-2.2TR from Phyllomedusa trinitatis (Trinidad leaf frog).